The chain runs to 455 residues: MSLVTDSPSLPEAAADSPLLAQVQLARAAARCTATLPTAIKNAALEAMATALLEHQEAILAANQADLEQAAEQVKAGELSASAYARLKLDAQKLADAVAGVRQVLRLPDPVGQALLIRELDEGLVLERRTYPLGVLGVIFESRPDALVQIAALAVKTGNSVLLKGGSEGLCSCQALMAAIQAGLQQIPEFPQGSLQLLTSRAEVKALLQLEGLVDLIIPRGSSSFVRYIMENTRIPVLGHADGLCHLYVDRAADVDMAVRLTLDSKTQYPAACNAIETLLVHAEIAPRFLPLAVQALREKGVELRGDPRCRQLVPDLIPATEDDWSTEYADLILSIKVVGSLDEAIAHIERYGSRHTEAIVTEDAAAAQRFLDEVDAAGVFHNASTRFADGFRYGLGAEVGISTQKLPPRGPVGLEGLVTYRYQLRGRGHLVADYTGPQARPFQHRDRLNTTGLS.

It belongs to the gamma-glutamyl phosphate reductase family.

The protein resides in the cytoplasm. It carries out the reaction L-glutamate 5-semialdehyde + phosphate + NADP(+) = L-glutamyl 5-phosphate + NADPH + H(+). The protein operates within amino-acid biosynthesis; L-proline biosynthesis; L-glutamate 5-semialdehyde from L-glutamate: step 2/2. Catalyzes the NADPH-dependent reduction of L-glutamate 5-phosphate into L-glutamate 5-semialdehyde and phosphate. The product spontaneously undergoes cyclization to form 1-pyrroline-5-carboxylate. The chain is Gamma-glutamyl phosphate reductase from Synechococcus sp. (strain JA-3-3Ab) (Cyanobacteria bacterium Yellowstone A-Prime).